The chain runs to 376 residues: Heme chaperone HemW (376 aa).

In terms of domain architecture, Radical SAM core spans 1-233 (MFTLPPISLY…DKLLKKAGYK (233 aa)). Y10 contributes to the S-adenosyl-L-methionine binding site. [4Fe-4S] cluster is bound by residues C16, C20, and C23. Residues G66, 67–68 (GT), E99, Q126, R138, and D162 contribute to the S-adenosyl-L-methionine site.

This sequence belongs to the anaerobic coproporphyrinogen-III oxidase family. HemW subfamily. It depends on [4Fe-4S] cluster as a cofactor.

It is found in the cytoplasm. Probably acts as a heme chaperone, transferring heme to an unknown acceptor. Binds one molecule of heme per monomer, possibly covalently. Binds 1 [4Fe-4S] cluster. The cluster is coordinated with 3 cysteines and an exchangeable S-adenosyl-L-methionine. This Buchnera aphidicola subsp. Acyrthosiphon pisum (strain APS) (Acyrthosiphon pisum symbiotic bacterium) protein is Heme chaperone HemW.